The primary structure comprises 792 residues: MEDDGGERSSFVAGLIENRAKEVGMAAFDLRSASLHLSQYIETSSSYQNTKTLLRFYDPSVIIVPPNKLAADGMVGVSELVDRCYSTVRKVVFARGCFDDTKGAVLIQNLAAEEPLALGLDTYYKQHYLSLAAAAATIKWIEAEKGVIVTNHSLTVTFNGSFDHMNIDATSVENLELIDPFHNALLGTSNKKRSLFQMFKTTKTAGGTRLLRANLLQPLKDIETINTRLDCLDELMSNEQLFFGLSQVLRKFPKETDRVLCHFCFKPKKVTEAVIGFENTRKSQNMISSIILLKTALDALPILAKVLKDAKCFLLANVYKSVCENDRYASIRKKIGEVIDDDVLHARVPFVARTQQCFALKAGIDGFLDIARRTFCDTSEAIHNLASKYREEFNLPNLKLPFNNRQGFFFRIPQKEVQGKLPNKFTQVVKHGKNIHCSSLELASLNVRNKSAAGECFIRTETCLEALMDAIREDISALTLLAEVLCLLDMIVNSFAHTISTKPVDRYSRPELTDSGPLAIDAGRHPILESIHNDFVSNSIFMSEATNMLVVMGPNMSGKSTYLQQVCLVVILAQIGCYVPARFATIRVVDRIFTRMGTMDNLESNSSTFMTEMRETAFIMQNVTNRSLIVMDELGRATSSSDGLAMAWSCCEYLLSLKAYTVFATHMDSLAELATIYPNVKVLHFYVDIRDNRLDFKFQLRDGTLHVPHYGLLLAEVAGLPSTVIDTARIITKRITDKENKRIELNCGKHHEIHRIYRVAQRLICLKYSRQTEDSIRQALQNLNESFTEERL.

553-560 (GPNMSGKS) provides a ligand contact to ATP.

It belongs to the DNA mismatch repair MutS family. Specifically expressed in flowers.

It localises to the nucleus. In terms of biological role, involved in meiotic recombination in association with MSH5. Required for reciprocal recombination and proper segregation of homologous chromosomes at meiosis. Promotes homologous recombination through facilitating chiasma formation during prophase I. Involved in the control of class I crossovers formation. This is DNA mismatch repair protein MSH4 (MSH4) from Arabidopsis thaliana (Mouse-ear cress).